We begin with the raw amino-acid sequence, 83 residues long: Mu-theraphotoxin-Hhn2c (83 aa).

A signal peptide spans 1–21 (MKASMFLALAGLVLLFVVGYA). Positions 22-48 (SESEEKEFPIELLSKIFAVDVFKGEER) are excised as a propeptide. Cystine bridges form between Cys-50-Cys-65, Cys-57-Cys-70, and Cys-64-Cys-77. Leu-81 is modified (leucine amide).

Belongs to the neurotoxin 10 (Hwtx-1) family. 15 (Hntx-3) subfamily. Monomer. In terms of tissue distribution, expressed by the venom gland.

The protein localises to the secreted. Its function is as follows. Lethal neurotoxin. Selectively blocks tetrodotoxin-sensitive voltage-gated sodium channels (Nav). Does not affect tetrodotoxin-resistant voltage-gated sodium channels or calcium channels. The sequence is that of Mu-theraphotoxin-Hhn2c from Cyriopagopus hainanus (Chinese bird spider).